Reading from the N-terminus, the 179-residue chain is NAD(P)H-quinone oxidoreductase subunit J (179 aa).

Belongs to the complex I 30 kDa subunit family. As to quaternary structure, NDH-1 can be composed of about 15 different subunits; different subcomplexes with different compositions have been identified which probably have different functions. In terms of processing, in at one experiment the initiator methionine has been seen to be kept and removed.

The protein localises to the cellular thylakoid membrane. It carries out the reaction a plastoquinone + NADH + (n+1) H(+)(in) = a plastoquinol + NAD(+) + n H(+)(out). It catalyses the reaction a plastoquinone + NADPH + (n+1) H(+)(in) = a plastoquinol + NADP(+) + n H(+)(out). NDH-1 shuttles electrons from an unknown electron donor, via FMN and iron-sulfur (Fe-S) centers, to quinones in the respiratory and/or the photosynthetic chain. The immediate electron acceptor for the enzyme in this species is believed to be plastoquinone. Couples the redox reaction to proton translocation, and thus conserves the redox energy in a proton gradient. Cyanobacterial NDH-1 also plays a role in inorganic carbon-concentration. This Synechocystis sp. (strain ATCC 27184 / PCC 6803 / Kazusa) protein is NAD(P)H-quinone oxidoreductase subunit J.